The primary structure comprises 284 residues: 4-diphosphocytidyl-2-C-methyl-D-erythritol kinase (284 aa).

Residue Lys-14 is part of the active site. 98–108 lines the ATP pocket; it reads PMGGGLGGGSS. Asp-140 is an active-site residue.

It belongs to the GHMP kinase family. IspE subfamily.

It carries out the reaction 4-CDP-2-C-methyl-D-erythritol + ATP = 4-CDP-2-C-methyl-D-erythritol 2-phosphate + ADP + H(+). It participates in isoprenoid biosynthesis; isopentenyl diphosphate biosynthesis via DXP pathway; isopentenyl diphosphate from 1-deoxy-D-xylulose 5-phosphate: step 3/6. Catalyzes the phosphorylation of the position 2 hydroxy group of 4-diphosphocytidyl-2C-methyl-D-erythritol. The chain is 4-diphosphocytidyl-2-C-methyl-D-erythritol kinase from Shewanella baltica (strain OS185).